Consider the following 451-residue polypeptide: Phosphoglucosamine mutase (451 aa).

The active-site Phosphoserine intermediate is Ser101. The Mg(2+) site is built by Ser101, Asp240, Asp242, and Asp244. Ser101 is subject to Phosphoserine.

It belongs to the phosphohexose mutase family. Requires Mg(2+) as cofactor. Post-translationally, activated by phosphorylation.

The catalysed reaction is alpha-D-glucosamine 1-phosphate = D-glucosamine 6-phosphate. Catalyzes the conversion of glucosamine-6-phosphate to glucosamine-1-phosphate. This is Phosphoglucosamine mutase from Streptococcus pyogenes serotype M1.